A 252-amino-acid chain; its full sequence is Hydroxyacylglutathione hydrolase (252 aa).

Zn(2+) is bound by residues histidine 54, histidine 56, aspartate 58, histidine 59, histidine 111, aspartate 130, and histidine 170.

Belongs to the metallo-beta-lactamase superfamily. Glyoxalase II family. Monomer. It depends on Zn(2+) as a cofactor.

It catalyses the reaction an S-(2-hydroxyacyl)glutathione + H2O = a 2-hydroxy carboxylate + glutathione + H(+). The protein operates within secondary metabolite metabolism; methylglyoxal degradation; (R)-lactate from methylglyoxal: step 2/2. In terms of biological role, thiolesterase that catalyzes the hydrolysis of S-D-lactoyl-glutathione to form glutathione and D-lactic acid. The polypeptide is Hydroxyacylglutathione hydrolase (Francisella tularensis subsp. novicida (strain U112)).